Reading from the N-terminus, the 558-residue chain is Formate--tetrahydrofolate ligase 2 (558 aa).

67–74 (TPAGEGKT) contributes to the ATP binding site.

Belongs to the formate--tetrahydrofolate ligase family.

The enzyme catalyses (6S)-5,6,7,8-tetrahydrofolate + formate + ATP = (6R)-10-formyltetrahydrofolate + ADP + phosphate. It functions in the pathway one-carbon metabolism; tetrahydrofolate interconversion. The protein is Formate--tetrahydrofolate ligase 2 of Desulfitobacterium hafniense (strain Y51).